The chain runs to 434 residues: Glutamate-1-semialdehyde 2,1-aminomutase 1 (434 aa).

Lysine 270 carries the post-translational modification N6-(pyridoxal phosphate)lysine.

The protein belongs to the class-III pyridoxal-phosphate-dependent aminotransferase family. HemL subfamily. In terms of assembly, homodimer. It depends on pyridoxal 5'-phosphate as a cofactor.

It localises to the cytoplasm. The catalysed reaction is (S)-4-amino-5-oxopentanoate = 5-aminolevulinate. It functions in the pathway porphyrin-containing compound metabolism; protoporphyrin-IX biosynthesis; 5-aminolevulinate from L-glutamyl-tRNA(Glu): step 2/2. This chain is Glutamate-1-semialdehyde 2,1-aminomutase 1, found in Bacillus thuringiensis (strain Al Hakam).